A 110-amino-acid polypeptide reads, in one-letter code: MNYANFGLDFLNSVANAVVEGKKLDLASKGLQLKSRALDTERAFNYDRLAFEKHKFETNNDLKIYGDAMRISALRAAGLRINPYSNGRQIYQDEADLANLHSYYSFYKTD.

The protein belongs to the vesivirus VP2 protein family. Homooligomer. The portal-like structure consists in 12 copies of VP2. Interacts with capsid protein VP1.

It is found in the virion. The protein resides in the host cytoplasm. Functionally, minor structural protein that forms a portal-like structure at a unique three-fold axis of symmetry, following binding to the host receptor. The channel formed by VP2 may allow the delivery of the viral genome through the host endosomal membrane. The sequence is that of Minor capsid protein VP2 from Otariidae (fur seals &amp; sea lions).